A 433-amino-acid polypeptide reads, in one-letter code: MSFPKELEKVLEITKAQNVWRRTQTLNLIASENVMSPLAESVYMSDFMSRYAEGKPYKRYYQGTKYTDEIETLAMDLMNEITNSKDCDLRPTSGTIANAAVFRVLAEPGDKALIAPVQAGAHVSHTKFGTLGALGIQHIEMPFDEENINVDVDKAIKMIEEVKPKFVVLGGSLYLFPHPTKELAPHVHAVGAKLVYDAAHVYGLIEGKVWSSPLKEGADIMTVSTHKTFPGPQGGAIFSDGSEVFKQVSRTIFPWFVSNHHLHRLPATAVTAIEMKYFGESYANQITRNSKALAEALAERGFKVIGENLGYTKSHQVAVDVRQFGGGNKIAKLLEDANIIVNKNLLPYDKPENVSDPSGLRIGVQEMTRYGMKESEMEEIAELFKKVIIDKKDINEVKKEVIDMRKNFLEVKYTFDDMKDLEKYSSKSLKLII.

121–123 is a binding site for (6S)-5,6,7,8-tetrahydrofolate; that stretch reads AHV. Lys-227 carries the N6-(pyridoxal phosphate)lysine modification. Glu-243 contacts (6S)-5,6,7,8-tetrahydrofolate.

Belongs to the SHMT family. Homodimer. The cofactor is pyridoxal 5'-phosphate.

It localises to the cytoplasm. It functions in the pathway amino-acid biosynthesis; glycine biosynthesis; glycine from L-serine: step 1/1. In terms of biological role, catalyzes the reversible interconversion of serine and glycine with a modified folate serving as the one-carbon carrier. Also exhibits a pteridine-independent aldolase activity toward beta-hydroxyamino acids, producing glycine and aldehydes, via a retro-aldol mechanism. This chain is Serine hydroxymethyltransferase, found in Saccharolobus islandicus (strain Y.G.57.14 / Yellowstone #1) (Sulfolobus islandicus).